The chain runs to 238 residues: Ribosomal RNA small subunit methyltransferase G (238 aa).

S-adenosyl-L-methionine-binding positions include G77, F82, 128-129, and R147; that span reads AE.

The protein belongs to the methyltransferase superfamily. RNA methyltransferase RsmG family.

The protein localises to the cytoplasm. In terms of biological role, specifically methylates the N7 position of guanine in position 535 of 16S rRNA. The polypeptide is Ribosomal RNA small subunit methyltransferase G (Listeria innocua serovar 6a (strain ATCC BAA-680 / CLIP 11262)).